A 121-amino-acid polypeptide reads, in one-letter code: Protransforming growth factor alpha (121 aa).

A signal peptide is located at residue Leu-1. The propeptide at 2–16 is removed in mature form; it reads ENSTSLLSDPPVAAA. Residues 2 to 75 lie on the Extracellular side of the membrane; sequence ENSTSLLSDP…AVVAASQKKQ (74 aa). A glycan (N-linked (GlcNAc...) asparagine) is linked at Asn-3. The EGF-like domain occupies 20–60; the sequence is HFNDCPDSHTQFCFHGTCRFLVQEDRPACVCHSGYVGARCE. 3 disulfides stabilise this stretch: Cys-24–Cys-37, Cys-32–Cys-48, and Cys-50–Cys-59. Positions 67 to 121 are cleaved as a propeptide — removed in mature form; that stretch reads VVAASQKKQAITALVVVSIVALAVLIITCVLIHCCQVRKHCEWCRALICRHEKPS. Residues 76-101 traverse the membrane as a helical segment; the sequence is AITALVVVSIVALAVLIITCVLIHCC.

In terms of assembly, interacts with the PDZ domains of MAGI3, SDCBP and SNTA1. The interaction with SDCBP, is required for the targeting to the cell surface. In the endoplasmic reticulum, in its immature form (i.e. with a prosegment and lacking full N-glycosylation), interacts with CNIH. In the Golgi apparatus, may form a complex with CNIH and GORASP2. Interacts (via cytoplasmic C-terminal domain) with NKD2. As to expression, hypothalamus.

The protein localises to the secreted. Its subcellular location is the extracellular space. It localises to the cell membrane. TGF alpha is a mitogenic polypeptide that is able to bind to the EGF receptor/EGFR and to act synergistically with TGF beta to promote anchorage-independent cell proliferation in soft agar. This is Protransforming growth factor alpha (TGFA) from Macaca mulatta (Rhesus macaque).